The primary structure comprises 239 residues: Heptaprenylglyceryl phosphate synthase (239 aa).

Lysine 12 contacts sn-glycerol 1-phosphate. The Mg(2+) site is built by aspartate 14 and threonine 40. Sn-glycerol 1-phosphate-binding positions include tyrosine 159–glycine 164, glycine 189, and glycine 209–asparagine 210.

It belongs to the GGGP/HepGP synthase family. Group I subfamily. As to quaternary structure, homodimer. Mg(2+) is required as a cofactor.

It carries out the reaction sn-glycerol 1-phosphate + all-trans-heptaprenyl diphosphate = 3-heptaprenyl-sn-glycero-1-phosphate + diphosphate. It functions in the pathway membrane lipid metabolism; glycerophospholipid metabolism. Its function is as follows. Prenyltransferase that catalyzes in vivo the transfer of the heptaprenyl moiety of heptaprenyl pyrophosphate (HepPP; 35 carbon atoms) to the C3 hydroxyl of sn-glycerol-1-phosphate (G1P), producing heptaprenylglyceryl phosphate (HepGP). This reaction is an ether-bond-formation step in the biosynthesis of archaea-type G1P-based membrane lipids found in Bacillales. In Geobacillus thermodenitrificans (strain NG80-2), this protein is Heptaprenylglyceryl phosphate synthase.